Consider the following 578-residue polypeptide: A-type ATP synthase subunit A (578 aa).

Residue 228–235 (GPFGSGKT) participates in ATP binding.

It belongs to the ATPase alpha/beta chains family. Has multiple subunits with at least A(3), B(3), C, D, E, F, H, I and proteolipid K(x).

It localises to the cell membrane. The catalysed reaction is ATP + H2O + 4 H(+)(in) = ADP + phosphate + 5 H(+)(out). Functionally, component of the A-type ATP synthase that produces ATP from ADP in the presence of a proton gradient across the membrane. The A chain is the catalytic subunit. In Methanococcoides burtonii (strain DSM 6242 / NBRC 107633 / OCM 468 / ACE-M), this protein is A-type ATP synthase subunit A.